The chain runs to 369 residues: Integrator complex assembly factor WDR73 (369 aa).

3 WD repeats span residues 74-114 (FIDE…RDVI), 266-306 (AASE…SAMK), and 326-366 (GREP…VHDG).

This sequence belongs to the WD repeat WDR73 family.

The protein resides in the cytoplasm. It localises to the cytoskeleton. Its subcellular location is the spindle. It is found in the spindle pole. The protein localises to the cleavage furrow. Its function is as follows. Component of a multiprotein complex required for the assembly of the RNA endonuclease module of the integrator complex. Associates with ints9 and ints11 in the cytoplasm, stabilizing the ints9-ints11 heterodimer and blocking the active site of ints11. Brat1 then joins the complex and plugs the active site of ints11, leading to wdr73 release and nuclear import of ints9 and ints11. The sequence is that of Integrator complex assembly factor WDR73 (wdr73) from Xenopus laevis (African clawed frog).